The chain runs to 107 residues: UPF0060 membrane protein ZMO1566 (107 aa).

Helical transmembrane passes span 4–24 (LLYI…WAWI), 29–49 (SPLW…LLTF), 55–75 (AGKA…LWSW), and 84–104 (HWDL…LWMP).

It belongs to the UPF0060 family.

The protein resides in the cell inner membrane. This chain is UPF0060 membrane protein ZMO1566, found in Zymomonas mobilis subsp. mobilis (strain ATCC 31821 / ZM4 / CP4).